The primary structure comprises 177 residues: Cytochrome c oxidase assembly protein CtaG (177 aa).

Over 1 to 8 (MTQKAKNT) the chain is Cytoplasmic. A helical; Signal-anchor for type II membrane protein transmembrane segment spans residues 9-29 (IYLLILIILSMLCLVYASVPL). Residues 30 to 177 (YSIFCKVTGY…TFFKYKENTK (148 aa)) lie on the Periplasmic side of the membrane.

It belongs to the COX11/CtaG family.

Its subcellular location is the cell inner membrane. Functionally, exerts its effect at some terminal stage of cytochrome c oxidase synthesis, probably by being involved in the insertion of the copper B into subunit I. In Ehrlichia ruminantium (strain Welgevonden), this protein is Cytochrome c oxidase assembly protein CtaG.